Consider the following 537-residue polypeptide: uncharacterized protein (537 aa).

Belongs to the RuBisCO large chain family. Type IV subfamily.

Unknown. Probably does not have RuBisCO activity. This is an uncharacterized protein from Symbiodinium sp. (Dinoflagellate).